A 439-amino-acid chain; its full sequence is Ornithine aminotransferase, mitochondrial (439 aa).

Residues 1–25 (MLSKLASLQTIAALRRGVHTSVASA) constitute a mitochondrion transit peptide. An N6-acetyllysine mark is found at Lys-49 and Lys-66. N6-succinyllysine is present on Lys-102. N6-acetyllysine; alternate is present on Lys-107. Position 107 is an N6-succinyllysine; alternate (Lys-107). Lys-292 carries the post-translational modification N6-(pyridoxal phosphate)lysine. Residue Lys-362 is modified to N6-acetyllysine; alternate. Lys-362 carries the N6-succinyllysine; alternate modification. N6-acetyllysine occurs at positions 386 and 392. Lys-405 bears the N6-acetyllysine; alternate mark. Lys-405 is modified (N6-succinyllysine; alternate). Residue Lys-421 is modified to N6-acetyllysine.

Belongs to the class-III pyridoxal-phosphate-dependent aminotransferase family. Homohexamer. The cofactor is pyridoxal 5'-phosphate.

The protein resides in the mitochondrion matrix. The catalysed reaction is L-ornithine + 2-oxoglutarate = L-glutamate 5-semialdehyde + L-glutamate. The protein operates within amino-acid biosynthesis; L-proline biosynthesis; L-glutamate 5-semialdehyde from L-ornithine: step 1/1. Its function is as follows. Catalyzes the reversible interconversion of L-ornithine and 2-oxoglutarate to L-glutamate semialdehyde and L-glutamate. The sequence is that of Ornithine aminotransferase, mitochondrial (Oat) from Mus musculus (Mouse).